The chain runs to 797 residues: Inulosucrase (797 aa).

The signal sequence occupies residues 1–36 (MLENKNHKKISLSGKSLLMGTLSTAAIVLSASTANA). Residues 54-64 (ASSVNNENNKQ) are compositionally biased toward polar residues. The interval 54–176 (ASSVNNENNK…SVKPAENATK (123 aa)) is disordered. 2 stretches are compositionally biased toward basic and acidic residues: residues 65-75 (VTEKDSADKST) and 82-95 (ANTK…ETTE). Low complexity predominate over residues 130 to 139 (DQKTTNAATT). The span at 140-167 (DTKKDDVKQVEKKDSVDKTNAEENKDSS) shows a compositional bias: basic and acidic residues. Trp-271 provides a ligand contact to substrate. Asp-272 (nucleophile) is an active-site residue. Residue Asn-317 coordinates Ca(2+). Ser-340 is a binding site for substrate. Asp-419 provides a ligand contact to Ca(2+). 424–425 (RD) is a binding site for substrate. 4 residues coordinate Ca(2+): Gln-450, Trp-487, Asn-489, and Asp-521. Residues 522-524 (EIE) and Arg-542 contribute to the substrate site. The active-site Proton donor/acceptor is the Glu-524. Asp-660, Ile-662, and Ser-667 together coordinate Ca(2+). The disordered stretch occupies residues 708–766 (QPVTPIPNVPTTPETPTTPDKPEVPTTPEVPTTPETPTPEAPKNPVKKTSQSKLPKAGD). The segment covering 718-740 (TTPETPTTPDKPEVPTTPEVPTT) has biased composition (low complexity). The LPXTG sorting signal motif lies at 761 to 765 (LPKAG). Position 764 is a pentaglycyl murein peptidoglycan amidated alanine (Ala-764). A propeptide spans 765–797 (GDKNSFAAVVLGAVSSILGAVGLTGVSKRKRNN) (removed by sortase).

Belongs to the glycosyl hydrolase 68 family. It depends on Ca(2+) as a cofactor.

The protein resides in the secreted. Its subcellular location is the cell wall. It carries out the reaction [(2-&gt;1)-beta-D-fructosyl](n) + sucrose = [(2-&gt;1)-beta-D-fructosyl](n+1) + D-glucose. Its function is as follows. Fructosyltransferase that catalyzes the polymerization of the fructose moiety of sucrose to produce inulin polymer and inulin oligosaccharides such as 1-kestose and nystose. The sequence is that of Inulosucrase from Lactobacillus johnsonii (strain CNCM I-12250 / La1 / NCC 533).